A 90-amino-acid chain; its full sequence is Small ribosomal subunit protein uS15c (90 aa).

It belongs to the universal ribosomal protein uS15 family. As to quaternary structure, part of the 30S ribosomal subunit.

It localises to the plastid. The protein resides in the chloroplast. The sequence is that of Small ribosomal subunit protein uS15c (rps15) from Drimys granadensis.